A 245-amino-acid polypeptide reads, in one-letter code: Ribosomal RNA small subunit methyltransferase J (245 aa).

Residues 94–95 (RD), 110–111 (ER), and aspartate 164 each bind S-adenosyl-L-methionine.

The protein belongs to the methyltransferase superfamily. RsmJ family.

The protein resides in the cytoplasm. It carries out the reaction guanosine(1516) in 16S rRNA + S-adenosyl-L-methionine = N(2)-methylguanosine(1516) in 16S rRNA + S-adenosyl-L-homocysteine + H(+). Its function is as follows. Specifically methylates the guanosine in position 1516 of 16S rRNA. This is Ribosomal RNA small subunit methyltransferase J from Dechloromonas aromatica (strain RCB).